The chain runs to 77 residues: Large ribosomal subunit protein uL29 (77 aa).

This sequence belongs to the universal ribosomal protein uL29 family.

This chain is Large ribosomal subunit protein uL29, found in Corynebacterium jeikeium (strain K411).